The sequence spans 365 residues: tRNA(Met) cytidine acetate ligase (365 aa).

ATP is bound by residues 7 to 20, G96, N152, and R175; that span reads IAEF…HKYL.

This sequence belongs to the TmcAL family.

It localises to the cytoplasm. It carries out the reaction cytidine(34) in elongator tRNA(Met) + acetate + ATP = N(4)-acetylcytidine(34) in elongator tRNA(Met) + AMP + diphosphate. Its function is as follows. Catalyzes the formation of N(4)-acetylcytidine (ac(4)C) at the wobble position of elongator tRNA(Met), using acetate and ATP as substrates. First activates an acetate ion to form acetyladenylate (Ac-AMP) and then transfers the acetyl group to tRNA to form ac(4)C34. In Streptococcus pneumoniae (strain ATCC BAA-255 / R6), this protein is tRNA(Met) cytidine acetate ligase.